The sequence spans 456 residues: Phosphatidylinositol N-acetylglucosaminyltransferase gpi3 subunit (456 aa).

This sequence belongs to the glycosyltransferase group 1 family. Glycosyltransferase 4 subfamily. In terms of assembly, component of a Phosphatidylinositol N-acetylglucosaminyltransferase complex.

It catalyses the reaction a 1,2-diacyl-sn-glycero-3-phospho-(1D-myo-inositol) + UDP-N-acetyl-alpha-D-glucosamine = a 6-(N-acetyl-alpha-D-glucosaminyl)-1-(1,2-diacyl-sn-glycero-3-phospho)-1D-myo-inositol + UDP + H(+). The protein operates within glycolipid biosynthesis; glycosylphosphatidylinositol-anchor biosynthesis. Catalytic subunit in the complex catalyzing the transfer of N-acetylglucosamine from UDP-N-acetylglucosamine to phosphatidylinositol, the first step of GPI biosynthesis. This is Phosphatidylinositol N-acetylglucosaminyltransferase gpi3 subunit (gpi3) from Schizosaccharomyces pombe (strain 972 / ATCC 24843) (Fission yeast).